Reading from the N-terminus, the 345-residue chain is Phenylalanine--tRNA ligase alpha subunit (345 aa).

Position 262 (E262) interacts with Mg(2+).

This sequence belongs to the class-II aminoacyl-tRNA synthetase family. Phe-tRNA synthetase alpha subunit type 1 subfamily. Tetramer of two alpha and two beta subunits. The cofactor is Mg(2+).

The protein resides in the cytoplasm. The enzyme catalyses tRNA(Phe) + L-phenylalanine + ATP = L-phenylalanyl-tRNA(Phe) + AMP + diphosphate + H(+). The protein is Phenylalanine--tRNA ligase alpha subunit of Ehrlichia canis (strain Jake).